The primary structure comprises 166 residues: MDNWVCYLIMSLDSKETYIGSTNNRQRRLNDHNNLNPSRKGAKRTRGRTWIPILYISGFENKNACLSFESGWKRLSKKRNIQRLLLINEISNIKLNYNNDPKWNRIMDLLYFVHNITFIGTKFKLNSDVKHPVILPENLFIEIMNEDWITELSWPYFINTYMISFD.

Residues 2-82 (DNWVCYLIMS…KRLSKKRNIQ (81 aa)) form the GIY-YIG domain. Residues 23–43 (NNRQRRLNDHNNLNPSRKGAK) form a disordered region.

This is an uncharacterized protein from Acanthamoeba polyphaga mimivirus (APMV).